We begin with the raw amino-acid sequence, 177 residues long: Hypoxanthine phosphoribosyltransferase (177 aa).

Diphosphate is bound by residues Arg43 and Gly44. Glu99 is a GMP binding site. Glu99 contributes to the IMP binding site. Residues Glu99 and Asp100 each coordinate Mg(2+). Residue Asp103 is the Proton acceptor of the active site. Residues Asp103–Leu108, Lys131, and Asp159 contribute to the GMP site. Residues Asp103–Leu108 and Lys131 contribute to the IMP site. A diphosphate-binding site is contributed by Arg165.

This sequence belongs to the purine/pyrimidine phosphoribosyltransferase family. Homotetramer. The cofactor is Mg(2+).

Its subcellular location is the cytoplasm. The catalysed reaction is IMP + diphosphate = hypoxanthine + 5-phospho-alpha-D-ribose 1-diphosphate. The enzyme catalyses GMP + diphosphate = guanine + 5-phospho-alpha-D-ribose 1-diphosphate. Its pathway is purine metabolism; IMP biosynthesis via salvage pathway; IMP from hypoxanthine: step 1/1. Functionally, purine salvage pathway enzyme which catalyzes the transfer of the ribosyl-5-phosphate group from 5-phospho-alpha-D-ribose 1-diphosphate (PRPP) to the N9 position of hypoxanthine to yield IMP (inosine 5'-monophosphate). To a lesser extent, can also act on guanine leading to GMP, but shows a highly less efficient activity with xanthine. This chain is Hypoxanthine phosphoribosyltransferase (hpt), found in Buchnera aphidicola subsp. Schizaphis graminum (strain Sg).